The following is a 344-amino-acid chain: Anthranilate phosphoribosyltransferase (344 aa).

Residues Gly80, Gly83–Asp84, Thr88, Asn90–Thr93, Lys108–Ser116, and Ser120 contribute to the 5-phospho-alpha-D-ribose 1-diphosphate site. Gly80 is an anthranilate binding site. Residue Ser92 participates in Mg(2+) binding. Asn111 contacts anthranilate. Residue Arg166 coordinates anthranilate. Asp225 and Glu226 together coordinate Mg(2+).

Belongs to the anthranilate phosphoribosyltransferase family. Homodimer. Mg(2+) is required as a cofactor.

The enzyme catalyses N-(5-phospho-beta-D-ribosyl)anthranilate + diphosphate = 5-phospho-alpha-D-ribose 1-diphosphate + anthranilate. The protein operates within amino-acid biosynthesis; L-tryptophan biosynthesis; L-tryptophan from chorismate: step 2/5. Catalyzes the transfer of the phosphoribosyl group of 5-phosphorylribose-1-pyrophosphate (PRPP) to anthranilate to yield N-(5'-phosphoribosyl)-anthranilate (PRA). The protein is Anthranilate phosphoribosyltransferase of Legionella pneumophila (strain Paris).